The chain runs to 172 residues: 3-hydroxydecanoyl-[acyl-carrier-protein] dehydratase (172 aa).

Histidine 71 is a catalytic residue.

This sequence belongs to the thioester dehydratase family. FabA subfamily. As to quaternary structure, homodimer.

It is found in the cytoplasm. The catalysed reaction is a (3R)-hydroxyacyl-[ACP] = a (2E)-enoyl-[ACP] + H2O. The enzyme catalyses (3R)-hydroxydecanoyl-[ACP] = (2E)-decenoyl-[ACP] + H2O. It catalyses the reaction (2E)-decenoyl-[ACP] = (3Z)-decenoyl-[ACP]. It functions in the pathway lipid metabolism; fatty acid biosynthesis. Its function is as follows. Necessary for the introduction of cis unsaturation into fatty acids. Catalyzes the dehydration of (3R)-3-hydroxydecanoyl-ACP to E-(2)-decenoyl-ACP and then its isomerization to Z-(3)-decenoyl-ACP. Can catalyze the dehydratase reaction for beta-hydroxyacyl-ACPs with saturated chain lengths up to 16:0, being most active on intermediate chain length. The sequence is that of 3-hydroxydecanoyl-[acyl-carrier-protein] dehydratase from Enterobacter sp. (strain 638).